We begin with the raw amino-acid sequence, 273 residues long: HMP-PP phosphatase (273 aa).

Catalysis depends on Asp8, which acts as the Nucleophile. Mg(2+) is bound by residues Asp8, Asp10, and Asp212.

Belongs to the HAD-like hydrolase superfamily. Cof family. Mg(2+) is required as a cofactor.

The catalysed reaction is 4-amino-2-methyl-5-(diphosphooxymethyl)pyrimidine + H2O = 4-amino-2-methyl-5-(phosphooxymethyl)pyrimidine + phosphate + H(+). Its function is as follows. Catalyzes the hydrolysis of 4-amino-2-methyl-5-hydroxymethylpyrimidine pyrophosphate (HMP-PP) to 4-amino-2-methyl-5-hydroxymethylpyrimidine phosphate (HMP-P). In Yersinia pseudotuberculosis serotype I (strain IP32953), this protein is HMP-PP phosphatase.